The chain runs to 220 residues: MGQKVSPVGLRIGVIRDWESKWYADKDFATLLHEDLKIRKYVKGRLKDAAVSTIEIERAANRVNVTIHTAKPGMVIGKGGSEVETLRKTLTDLTGKRVHININEIKRPDLDATLVAENIARQLENRISFRRAQKQSITRTLRSGAKGIKTLVSGRLGGADIARSEGYSEGTVPLHTLRADIDYGTAEAHTTYGRIGVKVWIYRGEVLPARKNVATEEGGK.

A KH type-2 domain is found at Ile-38 to Lys-106.

This sequence belongs to the universal ribosomal protein uS3 family. In terms of assembly, part of the 30S ribosomal subunit. Forms a tight complex with proteins S10 and S14.

Functionally, binds the lower part of the 30S subunit head. Binds mRNA in the 70S ribosome, positioning it for translation. The protein is Small ribosomal subunit protein uS3 of Brevibacillus brevis (strain 47 / JCM 6285 / NBRC 100599).